A 513-amino-acid chain; its full sequence is Cytochrome P450 monooxygenase eqxH (513 aa).

The chain crosses the membrane as a helical span at residues 13-32 (QYAILCGITVFTLFIVQLSL). N-linked (GlcNAc...) asparagine glycosylation is found at Asn130 and Asn295. Cys449 lines the heme pocket.

Belongs to the cytochrome P450 family. The cofactor is heme.

The protein resides in the membrane. It functions in the pathway mycotoxin biosynthesis. In terms of biological role, cytochrome P450 monooxygenase; part of the gene cluster that mediates the biosynthesis of equisetin, a trans-fused decalin-containing tetramic acid with antimicrobial activity. The PKS module of eqxS together with the enoylreductase eqxC catalyze the formation of the polyketide unit which is then conjugated to L-serine by the condensation domain of the eqxS NRPS module. Activity of the Dieckmann cyclase domain (RED) results in release of the Dieckmann product intermediate. Diels-Alderase eqx3 is involved in endo-selective Diels-Alder cycloaddition to form the decalin ring, leading to the production of N-desmethylequisetin also called trichosetin. Subsequent N-methylation is carried out by eqxD to give equisetin. This is Cytochrome P450 monooxygenase eqxH from Fusarium heterosporum.